A 112-amino-acid polypeptide reads, in one-letter code: uncharacterized protein (112 aa).

Coiled-coil stretches lie at residues Ala-15–Phe-53 and Leu-86–Lys-103.

This is an uncharacterized protein from Aquifex aeolicus (strain VF5).